Reading from the N-terminus, the 248-residue chain is Tryptophan synthase alpha chain (248 aa).

Active-site proton acceptor residues include Glu36 and Asp47.

The protein belongs to the TrpA family. As to quaternary structure, tetramer of two alpha and two beta chains.

It carries out the reaction (1S,2R)-1-C-(indol-3-yl)glycerol 3-phosphate + L-serine = D-glyceraldehyde 3-phosphate + L-tryptophan + H2O. It participates in amino-acid biosynthesis; L-tryptophan biosynthesis; L-tryptophan from chorismate: step 5/5. In terms of biological role, the alpha subunit is responsible for the aldol cleavage of indoleglycerol phosphate to indole and glyceraldehyde 3-phosphate. The protein is Tryptophan synthase alpha chain of Archaeoglobus fulgidus (strain ATCC 49558 / DSM 4304 / JCM 9628 / NBRC 100126 / VC-16).